The sequence spans 252 residues: MKFIGIIPARYASTRFPAKPLAVLGGKPVIQRVYEQVSGILDEAYVATDDERIESAVKAFGGKVVMTSVHHKSGTDRCYEAYTKVGRGYDVVVNIQGDEPFIQKSQLEAVKACFEDPATQIATLVKPFIPDDGLEALENVNSPKVVVGKNMNALYFSRSIIPFQRNVEKEGWLKGHTYYKHIGLYAYRADVLKEITSLPQSSLELAESLEQLRWLENGYTIKVGISEVETIGIDTPQDLARAEAFLKQREGE.

This sequence belongs to the KdsB family.

Its subcellular location is the cytoplasm. The enzyme catalyses 3-deoxy-alpha-D-manno-oct-2-ulosonate + CTP = CMP-3-deoxy-beta-D-manno-octulosonate + diphosphate. The protein operates within nucleotide-sugar biosynthesis; CMP-3-deoxy-D-manno-octulosonate biosynthesis; CMP-3-deoxy-D-manno-octulosonate from 3-deoxy-D-manno-octulosonate and CTP: step 1/1. It functions in the pathway bacterial outer membrane biogenesis; lipopolysaccharide biosynthesis. Its function is as follows. Activates KDO (a required 8-carbon sugar) for incorporation into bacterial lipopolysaccharide in Gram-negative bacteria. The polypeptide is 3-deoxy-manno-octulosonate cytidylyltransferase (Phocaeicola vulgatus (strain ATCC 8482 / DSM 1447 / JCM 5826 / CCUG 4940 / NBRC 14291 / NCTC 11154) (Bacteroides vulgatus)).